A 388-amino-acid chain; its full sequence is Succinate--CoA ligase [ADP-forming] subunit beta (388 aa).

An ATP-grasp domain is found at 9-244 (KEILRKFGVA…LDEEDPAEIE (236 aa)). ATP contacts are provided by residues K46, 53 to 55 (GRG), E99, A102, and E107. Residues N199 and D213 each contribute to the Mg(2+) site. Substrate is bound by residues N264 and 321–323 (GIM).

Belongs to the succinate/malate CoA ligase beta subunit family. Heterotetramer of two alpha and two beta subunits. Mg(2+) is required as a cofactor.

The enzyme catalyses succinate + ATP + CoA = succinyl-CoA + ADP + phosphate. It catalyses the reaction GTP + succinate + CoA = succinyl-CoA + GDP + phosphate. It functions in the pathway carbohydrate metabolism; tricarboxylic acid cycle; succinate from succinyl-CoA (ligase route): step 1/1. Its function is as follows. Succinyl-CoA synthetase functions in the citric acid cycle (TCA), coupling the hydrolysis of succinyl-CoA to the synthesis of either ATP or GTP and thus represents the only step of substrate-level phosphorylation in the TCA. The beta subunit provides nucleotide specificity of the enzyme and binds the substrate succinate, while the binding sites for coenzyme A and phosphate are found in the alpha subunit. This is Succinate--CoA ligase [ADP-forming] subunit beta from Burkholderia cenocepacia (strain HI2424).